The primary structure comprises 170 residues: Acetyl-CoA decarbonylase/synthase complex subunit epsilon 2 (170 aa).

This sequence belongs to the CdhB family. Heterotetramer of two alpha and two epsilon subunits. The ACDS complex is made up of alpha, epsilon, beta, gamma and delta subunits with a probable stoichiometry of (alpha(2)epsilon(2))(4)-beta(8)-(gamma(1)delta(1))(8).

The protein operates within one-carbon metabolism; methanogenesis from acetate. Its function is as follows. Part of a complex that catalyzes the reversible cleavage of acetyl-CoA, allowing growth on acetate as sole source of carbon and energy. The alpha-epsilon subcomponent functions as a carbon monoxide dehydrogenase. The precise role of the epsilon subunit is unclear; it may have a stabilizing role within the alpha(2)epsilon(2) component and/or be involved in electron transfer to FAD during a potential FAD-mediated CO oxidation. The sequence is that of Acetyl-CoA decarbonylase/synthase complex subunit epsilon 2 (cdhB2) from Methanosarcina mazei (strain ATCC BAA-159 / DSM 3647 / Goe1 / Go1 / JCM 11833 / OCM 88) (Methanosarcina frisia).